The primary structure comprises 217 residues: Holliday junction branch migration complex subunit RuvA (217 aa).

The domain I stretch occupies residues 1–64; the sequence is MIGKLTGILD…EDAIRLFGFE (64 aa). The domain II stretch occupies residues 65-145; that stretch reads TKVEQDWFCL…NAPHQSMPHF (81 aa). The flexible linker stretch occupies residues 146-160; it reads VSYSSETSSQAGTQH. Positions 161–217 are domain III; the sequence is TGHQHSMDALAALTKLGFERDQATHALQEAIKAFEGETPSSALLIRHSLKLLSSHLK.

The protein belongs to the RuvA family. As to quaternary structure, homotetramer. Forms an RuvA(8)-RuvB(12)-Holliday junction (HJ) complex. HJ DNA is sandwiched between 2 RuvA tetramers; dsDNA enters through RuvA and exits via RuvB. An RuvB hexamer assembles on each DNA strand where it exits the tetramer. Each RuvB hexamer is contacted by two RuvA subunits (via domain III) on 2 adjacent RuvB subunits; this complex drives branch migration. In the full resolvosome a probable DNA-RuvA(4)-RuvB(12)-RuvC(2) complex forms which resolves the HJ.

It localises to the cytoplasm. Its function is as follows. The RuvA-RuvB-RuvC complex processes Holliday junction (HJ) DNA during genetic recombination and DNA repair, while the RuvA-RuvB complex plays an important role in the rescue of blocked DNA replication forks via replication fork reversal (RFR). RuvA specifically binds to HJ cruciform DNA, conferring on it an open structure. The RuvB hexamer acts as an ATP-dependent pump, pulling dsDNA into and through the RuvAB complex. HJ branch migration allows RuvC to scan DNA until it finds its consensus sequence, where it cleaves and resolves the cruciform DNA. The polypeptide is Holliday junction branch migration complex subunit RuvA (Bartonella bacilliformis (strain ATCC 35685 / KC583 / Herrer 020/F12,63)).